The primary structure comprises 35 residues: Cupiennin-2b (35 aa).

Glutamine 35 is subject to Glutamine amide.

Expressed by the venom gland.

It is found in the secreted. The protein is Cupiennin-2b of Cupiennius salei (American wandering spider).